Here is a 150-residue protein sequence, read N- to C-terminus: Small ribosomal subunit protein eS6 (150 aa).

The protein belongs to the eukaryotic ribosomal protein eS6 family.

The polypeptide is Small ribosomal subunit protein eS6 (Caldivirga maquilingensis (strain ATCC 700844 / DSM 13496 / JCM 10307 / IC-167)).